A 66-amino-acid polypeptide reads, in one-letter code: Phylloseptin-S1 (66 aa).

An N-terminal signal peptide occupies residues 1-22 (MAFLKKSLFLVLFLGLVSLSIC). A propeptide spanning residues 23–46 (EEEKRETEEEEHDQEEDDKSEEKR) is cleaved from the precursor. The disordered stretch occupies residues 25–44 (EKRETEEEEHDQEEDDKSEE). The segment covering 30-41 (EEEEHDQEEDDK) has biased composition (acidic residues). At F65 the chain carries Phenylalanine amide.

As to expression, expressed by the skin glands.

It localises to the secreted. The protein localises to the target cell membrane. In terms of biological role, antimicrobial peptide with high activity against Gram-positive bacteria, low activity against Gram-negative bacteria, and moderate activity against fungi. Acts on bacterial biofilms (S.aureus) with the same potency than on bacteria. Acts by causing bacterial membrane disruption inducing leakage of the intracellular content followed by cell death. It adopts an alpha-helical amphipathic structure in membrane environments. Also shows highly potent antiparasitic activity against Leishmania species. Shows low hemolytic activity on horse and human erythrocytes (LC(50)=39 uM). Is also active on human monocytes (IC(50)=23 uM). In Phyllomedusa sauvagei (Sauvage's leaf frog), this protein is Phylloseptin-S1.